Consider the following 76-residue polypeptide: Acyl carrier protein (76 aa).

Residues 1 to 75 (MVLEKIKTLM…DVVLYIEKNL (75 aa)) form the Carrier domain. The residue at position 35 (serine 35) is an O-(pantetheine 4'-phosphoryl)serine.

Belongs to the acyl carrier protein (ACP) family. Post-translationally, 4'-phosphopantetheine is transferred from CoA to a specific serine of apo-ACP by AcpS. This modification is essential for activity because fatty acids are bound in thioester linkage to the sulfhydryl of the prosthetic group.

It localises to the cytoplasm. It participates in lipid metabolism; fatty acid biosynthesis. Its function is as follows. Carrier of the growing fatty acid chain in fatty acid biosynthesis. The chain is Acyl carrier protein from Phytoplasma australiense.